Reading from the N-terminus, the 129-residue chain is Protachykinin-1 (129 aa).

The N-terminal stretch at 1–19 (MKILVALAVFFLVSTQLFA) is a signal peptide. Residues 20–56 (EEIGANDDLNYWSDWYDSDQIKEELPEPFEHLLQRIA) constitute a propeptide that is removed on maturation. Methionine amide occurs at positions 68 and 107.

This sequence belongs to the tachykinin family. In terms of processing, the substance P form is cleaved at Pro-59 by the prolyl endopeptidase FAP (seprase) activity (in vitro). Substance P is also cleaved and degraded by Angiotensin-converting enzyme (ACE) and neprilysin (MME).

The protein resides in the secreted. Tachykinins are active peptides which excite neurons, evoke behavioral responses, are potent vasodilators and secretagogues, and contract (directly or indirectly) many smooth muscles. The sequence is that of Protachykinin-1 (TAC1) from Homo sapiens (Human).